Here is a 60-residue protein sequence, read N- to C-terminus: Large ribosomal subunit protein uL30 (60 aa).

It belongs to the universal ribosomal protein uL30 family. In terms of assembly, part of the 50S ribosomal subunit.

This is Large ribosomal subunit protein uL30 from Streptococcus pneumoniae serotype 2 (strain D39 / NCTC 7466).